The primary structure comprises 1338 residues: Phosphoribosylformylglycinamidine synthase (1338 aa).

The residue at position 215 (S215) is a Phosphoserine. Residues 322–333 (GATTGTGGRIRD) and 402–404 (AGF) each bind ATP. Position 569 is a phosphoserine (S569). T619 and T623 each carry phosphothreonine. A706 is an ATP binding site. Positions 707, 746, 750, and 909 each coordinate Mg(2+). S911 is an ATP binding site. The Glutamine amidotransferase type-1 domain occupies 1064–1302 (RVAILREEGS…AVMPHPERAV (239 aa)). C1158 functions as the Nucleophile in the catalytic mechanism. Catalysis depends on residues H1297 and E1299.

In the N-terminal section; belongs to the FGAMS family.

The protein localises to the cytoplasm. The enzyme catalyses N(2)-formyl-N(1)-(5-phospho-beta-D-ribosyl)glycinamide + L-glutamine + ATP + H2O = 2-formamido-N(1)-(5-O-phospho-beta-D-ribosyl)acetamidine + L-glutamate + ADP + phosphate + H(+). It participates in purine metabolism; IMP biosynthesis via de novo pathway; 5-amino-1-(5-phospho-D-ribosyl)imidazole from N(2)-formyl-N(1)-(5-phospho-D-ribosyl)glycinamide: step 1/2. Its function is as follows. Phosphoribosylformylglycinamidine synthase involved in the purines biosynthetic pathway. Catalyzes the ATP-dependent conversion of formylglycinamide ribonucleotide (FGAR) and glutamine to yield formylglycinamidine ribonucleotide (FGAM) and glutamate. The sequence is that of Phosphoribosylformylglycinamidine synthase (PFAS) from Homo sapiens (Human).